We begin with the raw amino-acid sequence, 140 residues long: METELMRIGVSLPDTLLSKFDEIIEKRGYSSRSEGIRDAIRSYISYYEWMGDIKGHRVGTVAVIYDHTKRGLSNALADIQHHYSHLIKSSVHIHLDHDNCFEVVVLDGDGEEIKELAEAIMSLKGVKFSKLTTVASNEKI.

Ni(2+)-binding residues include H81, H92, H94, and C100.

The protein belongs to the transcriptional regulatory CopG/NikR family. The cofactor is Ni(2+).

Functionally, transcriptional regulator. This chain is Putative nickel-responsive regulator 2, found in Methanosarcina mazei (strain ATCC BAA-159 / DSM 3647 / Goe1 / Go1 / JCM 11833 / OCM 88) (Methanosarcina frisia).